The following is a 514-amino-acid chain: Putative thymidine phosphorylase (514 aa).

The protein belongs to the thymidine/pyrimidine-nucleoside phosphorylase family. Type 2 subfamily.

The catalysed reaction is thymidine + phosphate = 2-deoxy-alpha-D-ribose 1-phosphate + thymine. The chain is Putative thymidine phosphorylase from Sphingopyxis alaskensis (strain DSM 13593 / LMG 18877 / RB2256) (Sphingomonas alaskensis).